We begin with the raw amino-acid sequence, 212 residues long: MKKVKIALTKGRLEEKAIEIFKDIGVNVDELLNKGRKLIFHSENKEYNIEFFLVKAPDVTTYVDYGAADIGIVGKDTLMEKEKDFYEVMDLKIGKCKFAVATLPEIDIYKGYNIKKIATKYPKVARKYFRNKGIDVELIKIEGSVELAPIVGLADAIVDIVETGSTLKENGLVVVEDICNISARMIVNKTSMKTKQNEISKIIENVNRVVNN.

Belongs to the ATP phosphoribosyltransferase family. Short subfamily. Heteromultimer composed of HisG and HisZ subunits.

The protein localises to the cytoplasm. It carries out the reaction 1-(5-phospho-beta-D-ribosyl)-ATP + diphosphate = 5-phospho-alpha-D-ribose 1-diphosphate + ATP. It functions in the pathway amino-acid biosynthesis; L-histidine biosynthesis; L-histidine from 5-phospho-alpha-D-ribose 1-diphosphate: step 1/9. Catalyzes the condensation of ATP and 5-phosphoribose 1-diphosphate to form N'-(5'-phosphoribosyl)-ATP (PR-ATP). Has a crucial role in the pathway because the rate of histidine biosynthesis seems to be controlled primarily by regulation of HisG enzymatic activity. This Clostridium novyi (strain NT) protein is ATP phosphoribosyltransferase.